The chain runs to 345 residues: N-acetyl-gamma-glutamyl-phosphate reductase (345 aa).

Residue C151 is part of the active site.

This sequence belongs to the NAGSA dehydrogenase family. Type 1 subfamily.

It localises to the cytoplasm. It carries out the reaction N-acetyl-L-glutamate 5-semialdehyde + phosphate + NADP(+) = N-acetyl-L-glutamyl 5-phosphate + NADPH + H(+). It participates in amino-acid biosynthesis; L-arginine biosynthesis; N(2)-acetyl-L-ornithine from L-glutamate: step 3/4. Functionally, catalyzes the NADPH-dependent reduction of N-acetyl-5-glutamyl phosphate to yield N-acetyl-L-glutamate 5-semialdehyde. The polypeptide is N-acetyl-gamma-glutamyl-phosphate reductase (Clostridium novyi (strain NT)).